A 232-amino-acid polypeptide reads, in one-letter code: Orotidine 5'-phosphate decarboxylase (232 aa).

Residues Asp-11, Lys-33, 61 to 70, Thr-116, Arg-179, Gln-188, Gly-208, and Arg-209 each bind substrate; that span reads DMKLFDIGAT. The Proton donor role is filled by Lys-63.

This sequence belongs to the OMP decarboxylase family. Type 1 subfamily. In terms of assembly, homodimer.

It catalyses the reaction orotidine 5'-phosphate + H(+) = UMP + CO2. The protein operates within pyrimidine metabolism; UMP biosynthesis via de novo pathway; UMP from orotate: step 2/2. Catalyzes the decarboxylation of orotidine 5'-monophosphate (OMP) to uridine 5'-monophosphate (UMP). In Cereibacter sphaeroides (strain ATCC 17023 / DSM 158 / JCM 6121 / CCUG 31486 / LMG 2827 / NBRC 12203 / NCIMB 8253 / ATH 2.4.1.) (Rhodobacter sphaeroides), this protein is Orotidine 5'-phosphate decarboxylase.